Here is a 352-residue protein sequence, read N- to C-terminus: 4-hydroxy-2-oxovalerate aldolase (352 aa).

In terms of domain architecture, Pyruvate carboxyltransferase spans Val-13–Ala-265. Arg-21 to Asp-22 lines the substrate pocket. A Mn(2+)-binding site is contributed by Asp-22. His-25 acts as the Proton acceptor in catalysis. Substrate-binding residues include Ser-175 and His-204. Mn(2+) is bound by residues His-204 and His-206. Residue Tyr-295 participates in substrate binding.

Belongs to the 4-hydroxy-2-oxovalerate aldolase family.

The catalysed reaction is (S)-4-hydroxy-2-oxopentanoate = acetaldehyde + pyruvate. This Mycobacterium avium (strain 104) protein is 4-hydroxy-2-oxovalerate aldolase.